Consider the following 50-residue polypeptide: Protein hunchback (50 aa).

C2H2-type zinc fingers lie at residues 1–5 (HLRNH), 11–33 (FKCNKCNYACVNKSMLNSHMKSH), and 39–50 (YRCADCTYATKY).

Belongs to the hunchback C2H2-type zinc-finger protein family.

The protein localises to the nucleus. In terms of biological role, gap class segmentation protein that controls development of head structures. This Platynereis dumerilii (Dumeril's clam worm) protein is Protein hunchback (hb).